The sequence spans 533 residues: Phospho-2-dehydro-3-deoxyheptonate aldolase 1, chloroplastic (533 aa).

A chloroplast-targeting transit peptide spans 1 to 57; that stretch reads MALSTNSTTSSLLPKTPLVQQPLLKNASLPTTTKAIRFIQPISAIHSSDSSKNTPIV. A compositionally biased stretch (polar residues) spans 47 to 56; that stretch reads SSDSSKNTPI. The disordered stretch occupies residues 47–70; sequence SSDSSKNTPIVSAKPSSPPAATST. Low complexity predominate over residues 57-70; the sequence is VSAKPSSPPAATST. Cys-145 contacts Mn(2+). Residues Arg-184, 343–344, Lys-366, and Arg-397 contribute to the substrate site; that span reads ER. Mn(2+) contacts are provided by His-429, Glu-471, and Asp-501.

It belongs to the class-II DAHP synthase family. In terms of assembly, homodimer. The cofactor is Mn(2+). In terms of tissue distribution, mostly expressed in flowers, especially in petal limbs and tubes, and, to a lower extent, in roots, stems, stigmas, anthers, leaves and sepals.

The protein resides in the plastid. Its subcellular location is the chloroplast. It carries out the reaction D-erythrose 4-phosphate + phosphoenolpyruvate + H2O = 7-phospho-2-dehydro-3-deoxy-D-arabino-heptonate + phosphate. Its pathway is metabolic intermediate biosynthesis; chorismate biosynthesis; chorismate from D-erythrose 4-phosphate and phosphoenolpyruvate: step 1/7. Its function is as follows. Involved in the production of volatile organic compounds (VOCs), including floral volatile benzenoids and phenylpropanoids (FVBP), in flowers of fragrant cultivars (e.g. cv. Mitchell and cv. V26), scent attracting pollinators (e.g. the night-active hawkmoth pollinator Manduca sexta). Catalyzes an aldol-like condensation reaction between phosphoenolpyruvate (PEP) and D-erythrose 4-phosphate (E4P) to generate 3-deoxy-D-arabino-heptulosonate 7-phosphate (DAH7P) and inorganic phosphate. The protein is Phospho-2-dehydro-3-deoxyheptonate aldolase 1, chloroplastic of Petunia hybrida (Petunia).